Reading from the N-terminus, the 275-residue chain is NAD(P)H-hydrate epimerase (275 aa).

The YjeF N-terminal domain occupies 49 to 258 (AIKIDQELFS…ALAAKYELNL (210 aa)). 102–106 (NNGGD) is a binding site for (6S)-NADPHX. K(+) is bound by residues N103 and D167. (6S)-NADPHX contacts are provided by residues 171–177 (GFSFKPP) and D200. S203 is a binding site for K(+).

This sequence belongs to the NnrE/AIBP family. The cofactor is K(+).

It catalyses the reaction (6R)-NADHX = (6S)-NADHX. The catalysed reaction is (6R)-NADPHX = (6S)-NADPHX. In terms of biological role, catalyzes the epimerization of the S- and R-forms of NAD(P)HX, a damaged form of NAD(P)H that is a result of enzymatic or heat-dependent hydration. This is a prerequisite for the S-specific NAD(P)H-hydrate dehydratase to allow the repair of both epimers of NAD(P)HX. This Ixodes scapularis (Black-legged tick) protein is NAD(P)H-hydrate epimerase.